A 498-amino-acid polypeptide reads, in one-letter code: uncharacterized protein (498 aa).

Helical transmembrane passes span 54–74 (LLKM…MAFL), 100–120 (VAVS…VVLV), 128–148 (MLAF…FMSS), 150–170 (GGLI…FPAL), 188–208 (SYLF…AYAL), 221–241 (WIYI…LFAL), 302–322 (VLYG…FVGL), 326–346 (YMTI…AWLS), 353–373 (AVYL…MLAS), 381–401 (TATY…LGWL), and 446–466 (AFTL…FFSL).

This sequence belongs to the major facilitator superfamily. Allantoate permease family.

The protein localises to the membrane. This is an uncharacterized protein from Schizosaccharomyces pombe (strain 972 / ATCC 24843) (Fission yeast).